We begin with the raw amino-acid sequence, 78 residues long: Acyl carrier protein (78 aa).

One can recognise a Carrier domain in the interval 2–77 (SDIEARVKKI…NAIDYANTHQ (76 aa)). Residue serine 37 is modified to O-(pantetheine 4'-phosphoryl)serine.

It belongs to the acyl carrier protein (ACP) family. 4'-phosphopantetheine is transferred from CoA to a specific serine of apo-ACP by AcpS. This modification is essential for activity because fatty acids are bound in thioester linkage to the sulfhydryl of the prosthetic group.

It localises to the cytoplasm. Its pathway is lipid metabolism; fatty acid biosynthesis. Carrier of the growing fatty acid chain in fatty acid biosynthesis. The sequence is that of Acyl carrier protein from Comamonas testosteroni (Pseudomonas testosteroni).